The following is a 197-amino-acid chain: ATP-dependent Clp protease proteolytic subunit (197 aa).

S98 functions as the Nucleophile in the catalytic mechanism. Residue H123 is part of the active site.

The protein belongs to the peptidase S14 family. Fourteen ClpP subunits assemble into 2 heptameric rings which stack back to back to give a disk-like structure with a central cavity, resembling the structure of eukaryotic proteasomes. Forms large heterooligomeric complexes consisting of an ATPase component (ClpX, ClpC or ClpE) and a proteolytic component (ClpP).

It is found in the cytoplasm. It carries out the reaction Hydrolysis of proteins to small peptides in the presence of ATP and magnesium. alpha-casein is the usual test substrate. In the absence of ATP, only oligopeptides shorter than five residues are hydrolyzed (such as succinyl-Leu-Tyr-|-NHMec, and Leu-Tyr-Leu-|-Tyr-Trp, in which cleavage of the -Tyr-|-Leu- and -Tyr-|-Trp bonds also occurs).. Its activity is regulated as follows. Low intrinsic peptidase activity is stimulated by ATP-binding subunits ClpC, ClpE and ClpX. Activity is disregulated by acyldepsipeptides (ADEP) antibiotics, which negate the need for ATP-binding subunits for activation and which makes it into an unregulated protease. Each ClpP subunit binds 1 ADEP molecule, which prevents binding of ClpX. ADEP binding causes conformational shifts that open the gated pore of the ring. Protease activity is inhibited by diisopropylfluoro-phosphate. Protease activity is inhibited by bortezomib, an oncology drug originally designed to work on the human proteasome. Its function is as follows. Cleaves peptides in various proteins in a process that requires ATP hydrolysis. Has a limited peptidase activity in the absence of ATP-binding subunits ClpC, ClpE or ClpX. Has a chymotrypsin-like activity. Plays a major role in the degradation of misfolded proteins. ClpXP is involved in the complete degradation of the site-2 clipped anti-sigma-W factor RsiW. This results in the release of SigW and the transcriptional activation of genes under the control of the sigma-W factor. Probably the major protease that degrades proteins tagged by trans-translation. The chain is ATP-dependent Clp protease proteolytic subunit from Bacillus subtilis (strain 168).